We begin with the raw amino-acid sequence, 252 residues long: Chitooligosaccharide deacetylase (252 aa).

2 residues coordinate Mg(2+): His61 and His125.

It belongs to the YdjC deacetylase family. ChbG subfamily. Homodimer. The cofactor is Mg(2+).

Its subcellular location is the cytoplasm. It catalyses the reaction N,N'-diacetylchitobiose + H2O = N-acetyl-beta-D-glucosaminyl-(1-&gt;4)-D-glucosamine + acetate. It carries out the reaction diacetylchitobiose-6'-phosphate + H2O = N'-monoacetylchitobiose-6'-phosphate + acetate. It functions in the pathway glycan degradation; chitin degradation. Functionally, involved in the degradation of chitin. ChbG is essential for growth on the acetylated chitooligosaccharides chitobiose and chitotriose but is dispensable for growth on cellobiose and chitosan dimer, the deacetylated form of chitobiose. Deacetylation of chitobiose-6-P and chitotriose-6-P is necessary for both the activation of the chb promoter by the regulatory protein ChbR and the hydrolysis of phosphorylated beta-glucosides by the phospho-beta-glucosidase ChbF. Catalyzes the removal of only one acetyl group from chitobiose-6-P to yield monoacetylchitobiose-6-P, the inducer of ChbR and the substrate of ChbF. The sequence is that of Chitooligosaccharide deacetylase from Salmonella paratyphi B (strain ATCC BAA-1250 / SPB7).